We begin with the raw amino-acid sequence, 403 residues long: Enoyl-[acyl-carrier-protein] reductase [NADH] (403 aa).

Residues 49-54, 75-76, 112-113, and 141-142 contribute to the NAD(+) site; these read GASSGY, FE, DA, and LA. Residue tyrosine 227 participates in substrate binding. The Proton donor role is filled by tyrosine 237. NAD(+) is bound by residues lysine 246 and 276 to 278; that span reads VVT.

Belongs to the TER reductase family. As to quaternary structure, monomer.

It catalyses the reaction a 2,3-saturated acyl-[ACP] + NAD(+) = a (2E)-enoyl-[ACP] + NADH + H(+). It functions in the pathway lipid metabolism; fatty acid biosynthesis. Its function is as follows. Involved in the final reduction of the elongation cycle of fatty acid synthesis (FAS II). Catalyzes the reduction of a carbon-carbon double bond in an enoyl moiety that is covalently linked to an acyl carrier protein (ACP). This is Enoyl-[acyl-carrier-protein] reductase [NADH] from Pseudomonas putida (strain GB-1).